The following is a 262-amino-acid chain: Spindlin-W (262 aa).

Residues 1 to 49 (MKTPFGKSPAQRSRADAGHTRVSASMMKKRTSHKKHRNNVGPSKPISQP) are disordered. The span at 27–38 (MKKRTSHKKHRN) shows a compositional bias: basic residues.

Belongs to the SPIN/STSY family. Expressed predominantly in ovarian granulosa and thecal cell.

Its subcellular location is the nucleus. In terms of biological role, may play a role in mitosis. This chain is Spindlin-W (SPINW), found in Gallus gallus (Chicken).